We begin with the raw amino-acid sequence, 119 residues long: MKRIAFVFSTAPHGTTAGREGLDALLATSALTDDLAVFFIADGVFQLLPGQKPDAVLARDYIATFKLLGLYDIEQCWICAASLRERGLDPQTPFVVEATPLEADALRRELANCDVILRF.

Belongs to the DsrF/TusC family. In terms of assembly, heterohexamer, formed by a dimer of trimers. The hexameric TusBCD complex contains 2 copies each of TusB, TusC and TusD. The TusBCD complex interacts with TusE.

The protein localises to the cytoplasm. Functionally, part of a sulfur-relay system required for 2-thiolation of 5-methylaminomethyl-2-thiouridine (mnm(5)s(2)U) at tRNA wobble positions. This is Protein TusC from Escherichia coli O127:H6 (strain E2348/69 / EPEC).